The sequence spans 384 residues: Ubiquitin-like modifier-activating enzyme 5 (384 aa).

Residues glycine 63, aspartate 84, lysine 107, asparagine 130, and asparagine 164 each contribute to the ATP site. Zn(2+) contacts are provided by cysteine 206 and cysteine 209. Cysteine 230 acts as the Glycyl thioester intermediate in catalysis. The Zn(2+) site is built by cysteine 283 and cysteine 288. A disordered region spans residues 352 to 375 (EAPEKSSAEATQAATAPVDDTSLE).

It belongs to the ubiquitin-activating E1 family. UBA5 subfamily.

In terms of biological role, E1-like enzyme which activates UFM1. The chain is Ubiquitin-like modifier-activating enzyme 5 from Drosophila persimilis (Fruit fly).